A 334-amino-acid polypeptide reads, in one-letter code: MTTTVQNLKAEFGKVGVLFGGRSAEREVSLMSGKGVLAALQSKGVDAHAFDPAERSLAELAAEKFDRVFIALHGSYGEDGTLQGALEQLGIPYTGPGVMASAISMDKVMTKRVCLSHGVPTPRFTVLDAETTSAAQLQSVAAEFGLPLMLKAPHEGSTIGIAKVETAEGMQAGFDLCAKYEAVVLVEQFVKGRELTVPVIGSGRNARALPIVEIRAPQGNYDYEHKYFSNDTEYLCPAPFDEAFTKRVQALAVSAFNAVGCTGWSRVDFMVRASDNEPFLLEINTSPGMTSHSLVPMSAKVAGTGYEDLCIEILRSAKTELKPSSHMQLQEQER.

In terms of domain architecture, ATP-grasp spans 111-315; sequence KRVCLSHGVP…YEDLCIEILR (205 aa). 141 to 196 serves as a coordination point for ATP; that stretch reads AAEFGLPLMLKAPHEGSTIGIAKVETAEGMQAGFDLCAKYEAVVLVEQFVKGRELT. The Mg(2+) site is built by Asp-268, Glu-282, and Asn-284.

The protein belongs to the D-alanine--D-alanine ligase family. Mg(2+) serves as cofactor. It depends on Mn(2+) as a cofactor.

The protein localises to the cytoplasm. The catalysed reaction is 2 D-alanine + ATP = D-alanyl-D-alanine + ADP + phosphate + H(+). The protein operates within cell wall biogenesis; peptidoglycan biosynthesis. In terms of biological role, cell wall formation. This chain is D-alanine--D-alanine ligase, found in Herminiimonas arsenicoxydans.